We begin with the raw amino-acid sequence, 326 residues long: Adenine deaminase (326 aa).

3 residues coordinate Zn(2+): His-14, His-16, and His-194. The active-site Proton donor is Glu-197. Asp-275 contacts Zn(2+). Position 276 (Asp-276) interacts with substrate.

Belongs to the metallo-dependent hydrolases superfamily. Adenosine and AMP deaminases family. Adenine deaminase type 2 subfamily. The cofactor is Zn(2+).

It catalyses the reaction adenine + H2O + H(+) = hypoxanthine + NH4(+). Functionally, catalyzes the hydrolytic deamination of adenine to hypoxanthine. Plays an important role in the purine salvage pathway and in nitrogen catabolism. In Crocosphaera subtropica (strain ATCC 51142 / BH68) (Cyanothece sp. (strain ATCC 51142)), this protein is Adenine deaminase.